The chain runs to 311 residues: Oligopeptide transport system permease protein OppC (311 aa).

Residues 1–48 (MTDYRTQPINQKNADFVEQVADRIEEMQLEGRSLWQDAKRRFFRNKAA) are Cytoplasmic-facing. A helical membrane pass occupies residues 49–69 (VASLIILAFIIIFITVAPWFF). The Periplasmic portion of the chain corresponds to 70–113 (PFTYEDTDWNMMSAAPTMEGYHFFGTDASGRDLLVRTAIGGRIS). The region spanning 110–299 (GRISLLVGIA…LTLFCFNFIG (190 aa)) is the ABC transmembrane type-1 domain. The helical transmembrane segment at 114–134 (LLVGIAGAFISVTIGTIYGAI) threads the bilayer. The Cytoplasmic portion of the chain corresponds to 135–146 (SGYVGGKTDMLM). The helical transmembrane segment at 147-169 (MRFLEILSSFPFMFFVILLVTLF) threads the bilayer. Over 170–172 (GQN) the chain is Periplasmic. The chain crosses the membrane as a helical span at residues 173–192 (IFLIFIAIGAIAWLGLARIV). Over 193 to 222 (RGQTLSLKNKEFVEAAIVCGVPRRQIILKH) the chain is Cytoplasmic. A helical membrane pass occupies residues 223–243 (IIPNVLGLVAVYASLEVPGLI). Residues 244-278 (LFESFLSFLGLGTQEPMSSWGALLSDGAAQMEVSP) lie on the Periplasmic side of the membrane. Residues 279–299 (WLLIFPAFFLCLTLFCFNFIG) traverse the membrane as a helical segment. Over 300–311 (DGLRDALDPKDR) the chain is Cytoplasmic.

It belongs to the binding-protein-dependent transport system permease family. OppBC subfamily. The complex is composed of two ATP-binding proteins (OppD and OppF), two transmembrane proteins (OppB and OppC) and a solute-binding protein (OppA).

Its subcellular location is the cell inner membrane. Functionally, part of the ABC transporter complex OppABCDF involved in the uptake of oligopeptides. Probably responsible for the translocation of the substrate across the membrane. The sequence is that of Oligopeptide transport system permease protein OppC (oppC) from Haemophilus influenzae (strain ATCC 51907 / DSM 11121 / KW20 / Rd).